The following is a 122-amino-acid chain: Large ribosomal subunit protein uL14 (122 aa).

This sequence belongs to the universal ribosomal protein uL14 family. In terms of assembly, part of the 50S ribosomal subunit. Forms a cluster with proteins L3 and L19. In the 70S ribosome, L14 and L19 interact and together make contacts with the 16S rRNA in bridges B5 and B8.

Its function is as follows. Binds to 23S rRNA. Forms part of two intersubunit bridges in the 70S ribosome. This is Large ribosomal subunit protein uL14 from Streptococcus pyogenes serotype M2 (strain MGAS10270).